A 126-amino-acid chain; its full sequence is Large ribosomal subunit protein uL22 (126 aa).

Belongs to the universal ribosomal protein uL22 family. In terms of assembly, part of the 50S ribosomal subunit.

Its function is as follows. This protein binds specifically to 23S rRNA; its binding is stimulated by other ribosomal proteins, e.g. L4, L17, and L20. It is important during the early stages of 50S assembly. It makes multiple contacts with different domains of the 23S rRNA in the assembled 50S subunit and ribosome. Functionally, the globular domain of the protein is located near the polypeptide exit tunnel on the outside of the subunit, while an extended beta-hairpin is found that lines the wall of the exit tunnel in the center of the 70S ribosome. The protein is Large ribosomal subunit protein uL22 of Ruegeria sp. (strain TM1040) (Silicibacter sp.).